The following is a 367-amino-acid chain: 4-hydroxy-3-methylbut-2-en-1-yl diphosphate synthase (flavodoxin) (367 aa).

Residues cysteine 268, cysteine 271, cysteine 303, and glutamate 310 each coordinate [4Fe-4S] cluster.

Belongs to the IspG family. It depends on [4Fe-4S] cluster as a cofactor.

It carries out the reaction (2E)-4-hydroxy-3-methylbut-2-enyl diphosphate + oxidized [flavodoxin] + H2O + 2 H(+) = 2-C-methyl-D-erythritol 2,4-cyclic diphosphate + reduced [flavodoxin]. The protein operates within isoprenoid biosynthesis; isopentenyl diphosphate biosynthesis via DXP pathway; isopentenyl diphosphate from 1-deoxy-D-xylulose 5-phosphate: step 5/6. Its function is as follows. Converts 2C-methyl-D-erythritol 2,4-cyclodiphosphate (ME-2,4cPP) into 1-hydroxy-2-methyl-2-(E)-butenyl 4-diphosphate. This Shouchella clausii (strain KSM-K16) (Alkalihalobacillus clausii) protein is 4-hydroxy-3-methylbut-2-en-1-yl diphosphate synthase (flavodoxin).